The sequence spans 426 residues: Trigger factor (426 aa).

The PPIase FKBP-type domain maps to 165–239 (GDVYKLNEAG…ISEIKRLELP (75 aa)).

Belongs to the FKBP-type PPIase family. Tig subfamily.

The protein localises to the cytoplasm. The enzyme catalyses [protein]-peptidylproline (omega=180) = [protein]-peptidylproline (omega=0). Functionally, involved in protein export. Acts as a chaperone by maintaining the newly synthesized protein in an open conformation. Functions as a peptidyl-prolyl cis-trans isomerase. This chain is Trigger factor, found in Pelodictyon phaeoclathratiforme (strain DSM 5477 / BU-1).